We begin with the raw amino-acid sequence, 238 residues long: MADTDPGYPRSSIEDDFNYGSCVASASVHIRMAFLRKVYSILSLQVLLTTVTSALFLYFQALRTFVHESPALIVVFALGSLGLIFALTLHRHTHPLNLYLLFAFTLSESLAVAAVVTFYDVYLVLQAFIMTTAVFLGLTAYTLQSKRDFTKFGAGLFAGLWILCLAGFLKLFFYSETMELVLASLGALLFCGFIIYDTHSLMHRLSPEEYVIAAISLYMDIINLFLHLLKFLEAVNKK.

The Cytoplasmic segment spans residues 1 to 38 (MADTDPGYPRSSIEDDFNYGSCVASASVHIRMAFLRKV). A helical transmembrane segment spans residues 39-59 (YSILSLQVLLTTVTSALFLYF). Residues 60–68 (QALRTFVHE) are Lumenal-facing. The helical transmembrane segment at 69-89 (SPALIVVFALGSLGLIFALTL) threads the bilayer. The Cytoplasmic portion of the chain corresponds to 90 to 97 (HRHTHPLN). Residues 98-118 (LYLLFAFTLSESLAVAAVVTF) traverse the membrane as a helical segment. Over 119-120 (YD) the chain is Lumenal. The chain crosses the membrane as a helical span at residues 121 to 141 (VYLVLQAFIMTTAVFLGLTAY). The Cytoplasmic portion of the chain corresponds to 142 to 151 (TLQSKRDFTK). The helical transmembrane segment at 152-172 (FGAGLFAGLWILCLAGFLKLF) threads the bilayer. The Lumenal segment spans residues 173–175 (FYS). The chain crosses the membrane as a helical span at residues 176–196 (ETMELVLASLGALLFCGFIIY). Residues 197-208 (DTHSLMHRLSPE) are Cytoplasmic-facing. An intramembrane region (helical) is located at residues 209–229 (EYVIAAISLYMDIINLFLHLL). Topologically, residues 230–238 (KFLEAVNKK) are cytoplasmic.

Belongs to the BI1 family. LFG subfamily. As to quaternary structure, interacts with ITPR3.

The protein resides in the golgi apparatus membrane. In terms of biological role, anti-apoptotic protein which can inhibit apoptosis induced by intrinsic and extrinsic apoptotic stimuli. Can modulate both capacitative Ca2+ entry and inositol 1,4,5-trisphosphate (IP3)-mediated Ca2+ release. This is Protein lifeguard 4 (Tmbim4) from Mus musculus (Mouse).